A 377-amino-acid chain; its full sequence is Chaperone protein DnaJ (377 aa).

In terms of domain architecture, J spans 5 to 69 (DYYEVLGISK…QKRAQYDQYG (65 aa)). The CR-type zinc finger occupies 134 to 216 (GKDAEIEIPR…CHGKGRVTKT (83 aa)). The Zn(2+) site is built by C147, C150, C164, C167, C190, C193, C204, and C207. 4 CXXCXGXG motif repeats span residues 147 to 154 (CDTCHGSG), 164 to 171 (CSHCGGKG), 190 to 197 (CQYCNGTG), and 204 to 211 (CPTCHGKG).

Belongs to the DnaJ family. In terms of assembly, homodimer. It depends on Zn(2+) as a cofactor.

It is found in the cytoplasm. Its function is as follows. Participates actively in the response to hyperosmotic and heat shock by preventing the aggregation of stress-denatured proteins and by disaggregating proteins, also in an autonomous, DnaK-independent fashion. Unfolded proteins bind initially to DnaJ; upon interaction with the DnaJ-bound protein, DnaK hydrolyzes its bound ATP, resulting in the formation of a stable complex. GrpE releases ADP from DnaK; ATP binding to DnaK triggers the release of the substrate protein, thus completing the reaction cycle. Several rounds of ATP-dependent interactions between DnaJ, DnaK and GrpE are required for fully efficient folding. Also involved, together with DnaK and GrpE, in the DNA replication of plasmids through activation of initiation proteins. This chain is Chaperone protein DnaJ, found in Listeria monocytogenes serotype 1/2a (strain 10403S).